Here is a 497-residue protein sequence, read N- to C-terminus: MTVFLSFAFFAAILTHIGCSNQRRSPENGGRRYNRIQHGQCAYTFILPEHDGNCRESATEQYNTNALQRDAPHVETDFSSQKLQHLEHVMENYTQWLQKLENYIVENMKSEMAQIQQNAVQNHTATMLEIGTSLLSQTAEQTRKLTDVETQVLNQTSRLEIQLLENSLSTYELEKQLLQQTNEILKIQEKNSLLEHKILEMEGKHKEELDTLKEEKENLQGLVTRQTFIIQELEKQLSRATSNNSVLQKQQLELMDTVHNLVSLCTKEVLLKGGKREEEKPFRDCADVYQAGFNKSGIYTIYFNNMPEPKKVFCNMDVNEGGWTVIQHREDGSLDFQRGWKEYKMGFGNPSGEYWLGNEFIFAITSQRQYMLRIELMDWEGNRAYSQYDRFHIGNQKQNYRLYLKGHTGTAGKQSSLILHGADFSTKDADNDNCMCKCALMLTGGWWFDACGPSNLNGMFYTAGQNHGKLNGIKWHYFKGPSYSLRSTTMMIRPLDF.

The first 19 residues, 1–19 (MTVFLSFAFFAAILTHIGC), serve as a signal peptide directing secretion. Residues 81–119 (QKLQHLEHVMENYTQWLQKLENYIVENMKSEMAQIQQNA) are a coiled coil. N-linked (GlcNAc...) asparagine glycans are attached at residues N92, N122, N154, N243, and N294. A coiled-coil region spans residues 153–261 (LNQTSRLEIQ…LELMDTVHNL (109 aa)). The 221-residue stretch at 276–496 (REEEKPFRDC…STTMMIRPLD (221 aa)) folds into the Fibrinogen C-terminal domain. 2 disulfide bridges follow: C285–C314 and C438–C451.

As to quaternary structure, homooligomer. Interacts with TEK/TIE2. Interacts with SVEP1/polydom. Interacts with THBD; this interaction significantly inhibits the generation of activated PC and TAFIa/CPB2 by the thrombin/thrombomodulin complex.

The protein resides in the secreted. Its function is as follows. Binds and activates TIE2 receptor by inducing its tyrosine phosphorylation. Implicated in endothelial developmental processes later and distinct from that of VEGF. Appears to play a crucial role in mediating reciprocal interactions between the endothelium and surrounding matrix and mesenchyme. Mediates blood vessel maturation/stability. It may play an important role in the heart early development. This Rattus norvegicus (Rat) protein is Angiopoietin-1 (Angpt1).